Consider the following 307-residue polypeptide: UDP-3-O-acyl-N-acetylglucosamine deacetylase (307 aa).

H78, H241, and D245 together coordinate Zn(2+). H268 serves as the catalytic Proton donor.

This sequence belongs to the LpxC family. Requires Zn(2+) as cofactor.

The enzyme catalyses a UDP-3-O-[(3R)-3-hydroxyacyl]-N-acetyl-alpha-D-glucosamine + H2O = a UDP-3-O-[(3R)-3-hydroxyacyl]-alpha-D-glucosamine + acetate. The protein operates within glycolipid biosynthesis; lipid IV(A) biosynthesis; lipid IV(A) from (3R)-3-hydroxytetradecanoyl-[acyl-carrier-protein] and UDP-N-acetyl-alpha-D-glucosamine: step 2/6. Functionally, catalyzes the hydrolysis of UDP-3-O-myristoyl-N-acetylglucosamine to form UDP-3-O-myristoylglucosamine and acetate, the committed step in lipid A biosynthesis. This chain is UDP-3-O-acyl-N-acetylglucosamine deacetylase, found in Polaromonas naphthalenivorans (strain CJ2).